Consider the following 475-residue polypeptide: MTAVKTQHSLAGQVYAVPLIQPDLRREEAIQQVADALQYLQNISGDIFSRISQRVELSRRQLQAIGERVSLAQAKIEKIKGSKKAIKVFSSAKYPAPEHLQEYNSVFTGALDPGLQRRPRYRIQSKHRPLDERALQEKLKYFPVCVSTKSEPEDEAEEGLGGLPSNISSISSLLLFNTTENLYKKYVFLDPLAGAVTKTHTMLGTEEEKLFDAPLSISKREQLEQPAPENYFYVPGLGQVPEIDVPSYLPDLPGVADDLMYSADLGPGIAPSAPGAIPELPAFHTEVAEPFQPEREDGALLAPPPPPPPPPPPPPPAPTAVVSAPQPPMSPDVVTVTGKVAREEDSGSGEAHSASVQGAPKEVVDPSSGRATLLESIRQAGGIGKAKLRSVKERKLEKKKQKEQEQVRATSQGGDLMSDLFNKLVMRRKGISGKGPGTGTSEGPGGAFSRMSDSIPPLPPPQQPAGDEDEDDWES.

The required for WASH complex assembly stretch occupies residues 1–54 (MTAVKTQHSLAGQVYAVPLIQPDLRREEAIQQVADALQYLQNISGDIFSRISQR). The interval 1–167 (MTAVKTQHSL…EGLGGLPSNI (167 aa)) is WHD1. Residue Lys-219 forms a Glycyl lysine isopeptide (Lys-Gly) (interchain with G-Cter in ubiquitin) linkage. Residues 296–475 (EDGALLAPPP…GDEDEDDWES (180 aa)) form a disordered region. A compositionally biased stretch (pro residues) spans 302 to 318 (APPPPPPPPPPPPPPAP). Residues 357–475 (QGAPKEVVDP…GDEDEDDWES (119 aa)) form a VCA region. Positions 369–391 (GRATLLESIRQAGGIGKAKLRSV) constitute a WH2 domain. Basic and acidic residues predominate over residues 390 to 406 (SVKERKLEKKKQKEQEQ). The segment covering 432–446 (SGKGPGTGTSEGPGG) has biased composition (gly residues). Residues 466-475 (GDEDEDDWES) show a composition bias toward acidic residues.

This sequence belongs to the WASH1 family. Component of the WASH core complex also described as WASH regulatory complex SHRC composed of WASHC1, WASHC2, WASHC3, WASHC4 and WASHC5. The WASH core complex associates with the F-actin-capping protein dimer (formed by CAPZA1, CAPZA2 or CAPZA3 and CAPZB) in a transient or substoichiometric manner which was initially described as WASH complex. Interacts (via WHD1 region) with WASHC2; the interaction is direct. Interacts with BECN1; WASHC1 and AMBRA1 can competitively interact with BECN1. Interacts with BLOC1S2; may associate with the BLOC-1 complex. Interacts with tubulin gamma chain (TUBG1 or TUBG2). Interacts with TBC1D23. In terms of processing, ubiquitinated at Lys-219 via 'Lys-63'-linked ubiquitin chains by the TRIM27:MAGEL2 E3 ubiquitin ligase complex, leading to promote endosomal F-actin assembly.

Its subcellular location is the early endosome membrane. It localises to the recycling endosome membrane. Acts as a component of the WASH core complex that functions as a nucleation-promoting factor (NPF) at the surface of endosomes, where it recruits and activates the Arp2/3 complex to induce actin polymerization, playing a key role in the fission of tubules that serve as transport intermediates during endosome sorting. Regulates the trafficking of endosomal alpha5beta1 integrin to the plasma membrane and involved in invasive cell migration. In T-cells involved in endosome-to-membrane recycling of receptors including T-cell receptor (TCR), CD28 and ITGAL; proposed to be implicated in T-cell proliferation and effector function. In dendritic cells involved in endosome-to-membrane recycling of major histocompatibility complex (MHC) class II probably involving retromer and subsequently allowing antigen sampling, loading and presentation during T-cell activation. Involved in cytokinesis and following polar body extrusion during oocyte meiotic maturation. Involved in Arp2/3 complex-dependent actin assembly driving Salmonella typhimurium invasion independent of ruffling. Involved in the exocytosis of MMP14 leading to matrix remodeling during invasive migration and implicating late endosome-to-plasma membrane tubular connections and cooperation with the exocyst complex. Involved in negative regulation of autophagy independently from its role in endosomal sorting by inhibiting BECN1 ubiquitination to inactivate PIK3C3/Vps34 activity. The sequence is that of WASH complex subunit 1 from Rattus norvegicus (Rat).